We begin with the raw amino-acid sequence, 402 residues long: Mitochondrial inner membrane protein OXA1 (402 aa).

The N-terminal 42 residues, 1–42, are a transit peptide targeting the mitochondrion; that stretch reads MFKLTSRLVTSRFAASSRLATARTIVLPRPHPSWISFQAKRF. The Mitochondrial intermembrane segment spans residues 43–118; it reads NSTGPNANDV…PSDIIQHVLE (76 aa). A helical membrane pass occupies residues 119–139; it reads AVHVYSGLPWWGTIAATTILI. Residues 140–199 are Mitochondrial matrix-facing; the sequence is RCLMFPLYVKSSDTVARNSHIKPELDALNNKLMSTTDLQQGQLVAMQRKKLLSSHGIKNR. Residues 200 to 220 form a helical membrane-spanning segment; that stretch reads WLAAPMLQIPIALGFFNALRH. The Mitochondrial intermembrane segment spans residues 221–239; sequence MANYPVDGFANQGVAWFTD. The helical transmembrane segment at 240 to 260 threads the bilayer; that stretch reads LTQADPYLGLQVITAAVFISF. The Mitochondrial matrix segment spans residues 261–275; it reads TRLGGETGAQQFSSP. The helical transmembrane segment at 276–292 threads the bilayer; it reads MKRLFTILPIISIPATM. Topologically, residues 293-297 are mitochondrial intermembrane; it reads NLSSA. Residues 298-316 traverse the membrane as a helical segment; sequence VVLYFAFNGAFSVLQTMIL. Over 317-402 the chain is Mitochondrial matrix; it reads RNKWVRSKLK…HKSNFINNKK (86 aa). The span at 366-385 shows a compositional bias: basic and acidic residues; sequence RQLMQDNEKKLQESFKEKRQ. The disordered stretch occupies residues 366–386; sequence RQLMQDNEKKLQESFKEKRQN.

Belongs to the OXA1/ALB3/YidC family. As to quaternary structure, interacts with the large ribosome subunit of mitochondrial ribosome. Interacts directly with MRP20. Interacts with OXA1.

The protein localises to the mitochondrion inner membrane. Functionally, mitochondrial inner membrane insertase that mediates the insertion of both mitochondrion-encoded precursors and nuclear-encoded proteins from the matrix into the inner membrane. Links mitoribosomes with the inner membrane. Forms pores capable of accommodating translocating protein segments. Essential for the activity and assembly of cytochrome c oxidase. Plays a central role in the translocation and export of the N-terminal part of the COX2 protein into the mitochondrial intermembrane space. This Saccharomyces cerevisiae (strain ATCC 204508 / S288c) (Baker's yeast) protein is Mitochondrial inner membrane protein OXA1.